The sequence spans 251 residues: Methylthioribulose-1-phosphate dehydratase (251 aa).

The tract at residues 1-26 (MTSVCDATNEDKENGSESTESQDKEH) is disordered. A compositionally biased stretch (basic and acidic residues) spans 9–26 (NEDKENGSESTESQDKEH). C100 serves as a coordination point for substrate. Zn(2+) contacts are provided by H118 and H120. Residue E142 is the Proton donor/acceptor of the active site. H198 provides a ligand contact to Zn(2+). Residues 232–251 (MDPSAPPIEENHYYDVQQSQ) are disordered.

Belongs to the aldolase class II family. MtnB subfamily. Zn(2+) serves as cofactor.

Its subcellular location is the cytoplasm. It catalyses the reaction 5-(methylsulfanyl)-D-ribulose 1-phosphate = 5-methylsulfanyl-2,3-dioxopentyl phosphate + H2O. It functions in the pathway amino-acid biosynthesis; L-methionine biosynthesis via salvage pathway; L-methionine from S-methyl-5-thio-alpha-D-ribose 1-phosphate: step 2/6. Functionally, catalyzes the dehydration of methylthioribulose-1-phosphate (MTRu-1-P) into 2,3-diketo-5-methylthiopentyl-1-phosphate (DK-MTP-1-P). Functions in the methionine salvage pathway. May play a role in apoptosis. This chain is Methylthioribulose-1-phosphate dehydratase, found in Salmo salar (Atlantic salmon).